The following is a 223-amino-acid chain: Deoxyribose-phosphate aldolase (223 aa).

The active-site Proton donor/acceptor is the aspartate 92. The Schiff-base intermediate with acetaldehyde role is filled by lysine 154. Lysine 182 serves as the catalytic Proton donor/acceptor.

The protein belongs to the DeoC/FbaB aldolase family. DeoC type 1 subfamily.

Its subcellular location is the cytoplasm. The catalysed reaction is 2-deoxy-D-ribose 5-phosphate = D-glyceraldehyde 3-phosphate + acetaldehyde. It participates in carbohydrate degradation; 2-deoxy-D-ribose 1-phosphate degradation; D-glyceraldehyde 3-phosphate and acetaldehyde from 2-deoxy-alpha-D-ribose 1-phosphate: step 2/2. Catalyzes a reversible aldol reaction between acetaldehyde and D-glyceraldehyde 3-phosphate to generate 2-deoxy-D-ribose 5-phosphate. The polypeptide is Deoxyribose-phosphate aldolase (Pasteurella multocida (strain Pm70)).